Consider the following 1174-residue polypeptide: MNATDAESRKPENKPSSESSSSGSTSGSSDGEVSSKTYFKNNKSKVLSGQREVVLEVVRDLSYTICKEAEEKLVERFPRKDGSNEMLPKEDSINTNHNYTTDSNEHPVELTTKTEECKNTEKTKKKSFVRALSKDKQLSAYRSRSRSTRLSYSGHISRTHSVEKSLSRYKKSVLRSRRTSFGHGRDSSTTKRSVSRDKDNRLRRRIGSSRSHTRSHSRFRRSEKKLPSRSPRRIRSQERRHERRRSMSSDYERIALRRSEPIKRRDKDEFFKNNKKVSGDIKKGKGNDNGTVAELEAKITERQRKSLDILTSRTGGACLTPDKLRMIQAEITDKSSAAYQSIAREALKKYIHGYINKVNVDSVAVITRKLLKDNIVRGRGVLCHSIIQAQATSPTFTHVYAAMVAIINSKFPNIGELLLKRLVIQFKRAFGCNDKTVCLTSSHFIAHLVNQRVAHEILALEILTLLIESPTDDNVEVAITFLKECGMKLTEVSSDRVGGIFELLKNILHQGKLDKRVQYMIKVLFQVRRDGFKDHQSIIESLELVEEYAQFTHLLLLEDVTYPKDILNEFKFDDQYETNEEKYKALSKNILGSHASDSDGSFGSGSNSETALSDCDKGKNEVNDKYTSGDIIDETKPNLIALRRTIYLTLNSCLDYEECAQKLMKMQLKTCQQNEFCQILLDCCAEQRTYEKFYGLLTHRICKMNKSFIEPFKEIFKDICQTTHCLDTNRLRNISKFFAHLLFTDAISWDVLDCIKLTEDEAITSRCIFIKSFFQELVEYMGLYHFNKKLKTEVLAGTLAGLFPKDNPRNIRFSINFFTSIGLGGITNELCQLLKIAPKSAPSSSSSSSLSSELSAPSDDDSSSDSENKKKHKGKNKKMTKKKNPSKKKEKTKKIVGKNKIAAKNKTIKRRTDKDNSSSKDNFLKSESSSNESISLDSLSSELFAPSSYSSSESSNDSESKEKHKGKNKKMTKKKNPSNKREKTKKKLSKNKKAPNKNTKKRMTEKDISSSESSISESKSLNCSASNQNENEKRKKRVTSKSRTKRVKMFKQCQWVDADNQRDIKRKKRAEYRYEPLVYRKRNEECLKKGAPNCRKDNYGNRQNHEISQRHDSEIKRRREERKKRHHEKNHSREYKRSKLGLCQREYFLYMCCQFYYPCTFQCLCQNCHFTFYS.

The span at 1-15 (MNATDAESRKPENKP) shows a compositional bias: basic and acidic residues. Disordered regions lie at residues 1 to 51 (MNAT…SGQR), 79 to 110 (RKDG…PVEL), and 136 to 259 (KQLS…LRRS). Positions 16 to 35 (SSESSSSGSTSGSSDGEVSS) are enriched in low complexity. Residues 36-47 (KTYFKNNKSKVL) are compositionally biased toward polar residues. Positions 79 to 92 (RKDGSNEMLPKEDS) are enriched in basic and acidic residues. Residues 93–102 (INTNHNYTTD) are compositionally biased toward polar residues. The span at 138 to 153 (LSAYRSRSRSTRLSYS) shows a compositional bias: low complexity. A compositionally biased stretch (basic residues) spans 167–180 (SRYKKSVLRSRRTS). Basic and acidic residues predominate over residues 183–200 (HGRDSSTTKRSVSRDKDN). The span at 201-223 (RLRRRIGSSRSHTRSHSRFRRSE) shows a compositional bias: basic residues. A compositionally biased stretch (basic and acidic residues) spans 235 to 259 (RSQERRHERRRSMSSDYERIALRRS). The MIF4G domain maps to 348–531 (KKYIHGYINK…KVLFQVRRDG (184 aa)). Positions 597 to 608 (DSDGSFGSGSNS) are enriched in low complexity. Positions 597–616 (DSDGSFGSGSNSETALSDCD) are disordered. An MI domain is found at 641–757 (ALRRTIYLTL…SWDVLDCIKL (117 aa)). A compositionally biased stretch (low complexity) spans 840–857 (SAPSSSSSSSLSSELSAP). Disordered stretches follow at residues 840 to 1045 (SAPS…SRTK) and 1095 to 1133 (RKDN…NHSR). Positions 869 to 909 (KKKHKGKNKKMTKKKNPSKKKEKTKKIVGKNKIAAKNKTIK) are enriched in basic residues. Basic and acidic residues predominate over residues 910–924 (RRTDKDNSSSKDNFL). Low complexity predominate over residues 926-957 (SESSSNESISLDSLSSELFAPSSYSSSESSND). The span at 963 to 1001 (KHKGKNKKMTKKKNPSNKREKTKKKLSKNKKAPNKNTKK) shows a compositional bias: basic residues. Low complexity predominate over residues 1010-1020 (SSESSISESKS). Positions 1034–1045 (RKKRVTSKSRTK) are enriched in basic residues. A compositionally biased stretch (basic and acidic residues) spans 1095–1118 (RKDNYGNRQNHEISQRHDSEIKRR). A compositionally biased stretch (basic residues) spans 1119–1130 (REERKKRHHEKN).

Belongs to the CWC22 family. As to quaternary structure, component of the spliceosome C complex.

Its subcellular location is the nucleus speckle. Functionally, male determiner protein (M-factor) that controls male somatic sexual differentiation. Acts as a dominant factor that regulates the mRNA splicing of transformer (tra) and doublesex (dsx) transcripts and promotes expression of male splice forms of tra and dsx. Probably acts as a component of the spliceosome C complex required for mRNA splicing factor and exon-junction complex (EJC) assembly. Hinders eIF4AIII from non-specifically binding RNA and escorts it to the splicing machinery to promote EJC assembly on mature mRNAs. The protein is Male determiner protein Mdmd(V) of Musca domestica (House fly).